We begin with the raw amino-acid sequence, 140 residues long: Nucleoside diphosphate kinase (140 aa).

6 residues coordinate ATP: Lys-11, Phe-59, Arg-87, Thr-93, Arg-104, and Asn-114. His-117 (pros-phosphohistidine intermediate) is an active-site residue.

It belongs to the NDK family. Homotetramer. The cofactor is Mg(2+).

The protein localises to the cytoplasm. The catalysed reaction is a 2'-deoxyribonucleoside 5'-diphosphate + ATP = a 2'-deoxyribonucleoside 5'-triphosphate + ADP. The enzyme catalyses a ribonucleoside 5'-diphosphate + ATP = a ribonucleoside 5'-triphosphate + ADP. Major role in the synthesis of nucleoside triphosphates other than ATP. The ATP gamma phosphate is transferred to the NDP beta phosphate via a ping-pong mechanism, using a phosphorylated active-site intermediate. The protein is Nucleoside diphosphate kinase of Novosphingobium aromaticivorans (strain ATCC 700278 / DSM 12444 / CCUG 56034 / CIP 105152 / NBRC 16084 / F199).